The chain runs to 172 residues: MSKDMNVNEKIRAREVRLIDSNGDQLGVKSRQEALDIATTRNLDLVLVAPNAKPPVCRIMDYGKYRFEQQKKEKEARKKQKVINVKEVRFTPGIGDHDFETKLKNARKFLEKGDKVKAAVRFRGRAITHKELGREVLDRFAEEVKDLGTIETKPKMEGRNMFMMVAPINEKN.

This sequence belongs to the IF-3 family. As to quaternary structure, monomer.

The protein resides in the cytoplasm. Functionally, IF-3 binds to the 30S ribosomal subunit and shifts the equilibrium between 70S ribosomes and their 50S and 30S subunits in favor of the free subunits, thus enhancing the availability of 30S subunits on which protein synthesis initiation begins. This Oceanobacillus iheyensis (strain DSM 14371 / CIP 107618 / JCM 11309 / KCTC 3954 / HTE831) protein is Translation initiation factor IF-3.